The primary structure comprises 408 residues: Multidrug resistance protein MdtG (408 aa).

10 consecutive transmembrane segments (helical) span residues 16-36, 58-78, 92-112, 115-135, 146-166, 173-193, 221-241, 256-276, 290-310, and 378-398; these read LIVA…VMPF, IVFS…GGLA, LGMG…QFLI, ALLG…ATQV, TLST…GLLA, PVFF…LFCI, ILSL…IAPI, VAFI…LSAP, ILIT…YVQT, and AVFL…WNSL.

The protein belongs to the major facilitator superfamily. DHA1 family. MdtG (TC 2.A.1.2.20) subfamily.

Its subcellular location is the cell inner membrane. Functionally, confers resistance to fosfomycin and deoxycholate. The polypeptide is Multidrug resistance protein MdtG (Escherichia coli (strain SMS-3-5 / SECEC)).